The sequence spans 484 residues: Acetyl-coenzyme A carboxylase carboxyl transferase subunit beta, chloroplastic (484 aa).

The region spanning 223–484 (LWIQCDNCYG…LHAFFPLNKN (262 aa)) is the CoA carboxyltransferase N-terminal domain. 4 residues coordinate Zn(2+): Cys227, Cys230, Cys243, and Cys246. The C4-type zinc finger occupies 227 to 246 (CDNCYGLMYKKVKMNVCEQC).

Belongs to the AccD/PCCB family. As to quaternary structure, acetyl-CoA carboxylase is a heterohexamer composed of biotin carboxyl carrier protein, biotin carboxylase and 2 subunits each of ACCase subunit alpha and ACCase plastid-coded subunit beta (accD). Zn(2+) serves as cofactor.

The protein localises to the plastid. It localises to the chloroplast stroma. The catalysed reaction is N(6)-carboxybiotinyl-L-lysyl-[protein] + acetyl-CoA = N(6)-biotinyl-L-lysyl-[protein] + malonyl-CoA. The protein operates within lipid metabolism; malonyl-CoA biosynthesis; malonyl-CoA from acetyl-CoA: step 1/1. Component of the acetyl coenzyme A carboxylase (ACC) complex. Biotin carboxylase (BC) catalyzes the carboxylation of biotin on its carrier protein (BCCP) and then the CO(2) group is transferred by the transcarboxylase to acetyl-CoA to form malonyl-CoA. In Olimarabidopsis pumila (Dwarf rocket), this protein is Acetyl-coenzyme A carboxylase carboxyl transferase subunit beta, chloroplastic.